Reading from the N-terminus, the 285-residue chain is ATP phosphoribosyltransferase (285 aa).

It belongs to the ATP phosphoribosyltransferase family. Long subfamily. It depends on Mg(2+) as a cofactor.

The protein resides in the cytoplasm. The enzyme catalyses 1-(5-phospho-beta-D-ribosyl)-ATP + diphosphate = 5-phospho-alpha-D-ribose 1-diphosphate + ATP. The protein operates within amino-acid biosynthesis; L-histidine biosynthesis; L-histidine from 5-phospho-alpha-D-ribose 1-diphosphate: step 1/9. Its activity is regulated as follows. Feedback inhibited by histidine. Its function is as follows. Catalyzes the condensation of ATP and 5-phosphoribose 1-diphosphate to form N'-(5'-phosphoribosyl)-ATP (PR-ATP). Has a crucial role in the pathway because the rate of histidine biosynthesis seems to be controlled primarily by regulation of HisG enzymatic activity. The protein is ATP phosphoribosyltransferase of Sulfurisphaera tokodaii (strain DSM 16993 / JCM 10545 / NBRC 100140 / 7) (Sulfolobus tokodaii).